Here is a 436-residue protein sequence, read N- to C-terminus: MKCAVAILLVCLTLQQAAYGFLYNEEVKTEFQRRKQSLEEAGESLKQMGQNLQDNMQRSLAEGQEALQKHIKNLQQSMLSQKEALRNRGEALRETVGERLESMQNQGKDWMKKMQEGRETLQKKLGEQVETFNQTFQAGRLAIAKKVLEGSETMRKTIQNTTQSLQDKAEKVQETAGKNVEALKLIARKNALSLKESLDTLRENSVEENMQALRNFLPSQSEAMDLPKEKLQELMASIQNNTGLFQESWGQEKEKMKEMLRGLKRKVGERTEDMKRKMKARKEELEAEFQSRGDEAVQTVMEIRNVTIKHLREAGKKIKEIEEKIASLLPNSCLDFLRSKALKMGVKIVVQDLKSVFRMGWLRVPETFEKEEEIAPSTEEDGSEELEADSYDSKVGGESPISQRTEERQGAEERSRLRRRRAAVLRRMFGQWSRKS.

The signal sequence occupies residues 1–20 (MKCAVAILLVCLTLQQAAYG). 3 coiled-coil regions span residues 25–87 (EEVK…ALRN), 154–207 (MRKT…NSVE), and 247–329 (ESWG…ASLL). Acidic residues predominate over residues 371-390 (EEEIAPSTEEDGSEELEADS). A disordered region spans residues 371 to 419 (EEEIAPSTEEDGSEELEADSYDSKVGGESPISQRTEERQGAEERSRLRR). A compositionally biased stretch (basic and acidic residues) spans 404-415 (RTEERQGAEERS).

In terms of tissue distribution, component of the acid-insoluble organic matrix of the aragonitic skeleton (at protein level).

The protein resides in the secreted. This is an uncharacterized protein from Acropora millepora (Staghorn coral).